We begin with the raw amino-acid sequence, 209 residues long: Orotate phosphoribosyltransferase (209 aa).

5-phospho-alpha-D-ribose 1-diphosphate contacts are provided by residues arginine 96, lysine 100, histidine 102, and 122–130 (EDLISTGGS). Serine 126 provides a ligand contact to orotate.

Belongs to the purine/pyrimidine phosphoribosyltransferase family. PyrE subfamily. As to quaternary structure, homodimer. Mg(2+) serves as cofactor.

The catalysed reaction is orotidine 5'-phosphate + diphosphate = orotate + 5-phospho-alpha-D-ribose 1-diphosphate. It participates in pyrimidine metabolism; UMP biosynthesis via de novo pathway; UMP from orotate: step 1/2. Its function is as follows. Catalyzes the transfer of a ribosyl phosphate group from 5-phosphoribose 1-diphosphate to orotate, leading to the formation of orotidine monophosphate (OMP). The chain is Orotate phosphoribosyltransferase from Streptococcus pyogenes serotype M2 (strain MGAS10270).